The following is a 322-amino-acid chain: Mas-related G-protein coupled receptor member X4 (322 aa).

At M1–T31 the chain is on the extracellular side. N-linked (GlcNAc...) asparagine glycosylation is present at N25. The chain crosses the membrane as a helical span at residues V32 to L52. Topologically, residues G53–A60 are cytoplasmic. The helical transmembrane segment at V61–I81 threads the bilayer. At R82 to K96 the chain is on the extracellular side. N89 carries an N-linked (GlcNAc...) asparagine glycan. Residues I97–S117 form a helical membrane-spanning segment. At T118–H137 the chain is on the cytoplasmic side. A helical transmembrane segment spans residues L138–W158. Residues R159–D177 lie on the Extracellular side of the membrane. Residues F178–L198 traverse the membrane as a helical segment. Topologically, residues L199–I218 are cytoplasmic. The helical transmembrane segment at L219–I239 threads the bilayer. Residues Y240–Y254 lie on the Extracellular side of the membrane. A helical membrane pass occupies residues L255–V275. The Cytoplasmic portion of the chain corresponds to G276–P322. Residues P299 to P322 are disordered.

It belongs to the G-protein coupled receptor 1 family. Mas subfamily. As to expression, uniquely localized in a subset of small dorsal root and trigeminal sensory neurons.

It is found in the cell membrane. Functionally, orphan receptor. Probably involved in the function of nociceptive neurons. May regulate nociceptor function and/or development, including the sensation or modulation of pain. Potently activated by enkephalins. This is Mas-related G-protein coupled receptor member X4 (MRGPRX4) from Homo sapiens (Human).